The sequence spans 330 residues: tRNA U34 carboxymethyltransferase (330 aa).

Carboxy-S-adenosyl-L-methionine contacts are provided by residues Lys91, Trp105, Lys110, Gly130, Asp152–Ser154, Ile181–Glu182, Met196, Tyr200, and Arg315.

Belongs to the class I-like SAM-binding methyltransferase superfamily. CmoB family. As to quaternary structure, homotetramer.

It catalyses the reaction carboxy-S-adenosyl-L-methionine + 5-hydroxyuridine(34) in tRNA = 5-carboxymethoxyuridine(34) in tRNA + S-adenosyl-L-homocysteine + H(+). In terms of biological role, catalyzes carboxymethyl transfer from carboxy-S-adenosyl-L-methionine (Cx-SAM) to 5-hydroxyuridine (ho5U) to form 5-carboxymethoxyuridine (cmo5U) at position 34 in tRNAs. The polypeptide is tRNA U34 carboxymethyltransferase (Shewanella oneidensis (strain ATCC 700550 / JCM 31522 / CIP 106686 / LMG 19005 / NCIMB 14063 / MR-1)).